We begin with the raw amino-acid sequence, 249 residues long: Type III pantothenate kinase (249 aa).

Residue 6–13 (DCGNSFIK) coordinates ATP. Substrate is bound by residues tyrosine 93 and 100-103 (GMDR). Aspartate 102 functions as the Proton acceptor in the catalytic mechanism. Aspartate 122 contacts K(+). Threonine 125 contacts ATP. Threonine 181 contributes to the substrate binding site.

Belongs to the type III pantothenate kinase family. Homodimer. NH4(+) serves as cofactor. Requires K(+) as cofactor.

The protein localises to the cytoplasm. It catalyses the reaction (R)-pantothenate + ATP = (R)-4'-phosphopantothenate + ADP + H(+). Its pathway is cofactor biosynthesis; coenzyme A biosynthesis; CoA from (R)-pantothenate: step 1/5. Its function is as follows. Catalyzes the phosphorylation of pantothenate (Pan), the first step in CoA biosynthesis. This is Type III pantothenate kinase from Pseudomonas putida (strain ATCC 47054 / DSM 6125 / CFBP 8728 / NCIMB 11950 / KT2440).